The sequence spans 249 residues: Polyhedrin (249 aa).

Belongs to the polyhedrin family.

Functionally, major component of the virus occlusion bodies, which are large proteinaceous structures (polyhedra), that protect the virus from the outside environment for extended periods until they are ingested by insect larvae. This Lepidoptera (butterflies and moths) protein is Polyhedrin (PH).